We begin with the raw amino-acid sequence, 430 residues long: uncharacterized protein (430 aa).

10 helical membrane-spanning segments follow: residues Phe-13–Phe-33, Leu-47–Ala-67, Val-88–Ile-108, Gly-138–Met-158, Leu-228–Phe-248, Ser-264–Ile-284, Ile-296–Val-316, Ala-319–Met-339, Phe-358–Val-378, and Tyr-383–Leu-403.

It belongs to the major facilitator superfamily.

Its subcellular location is the cell membrane. This is an uncharacterized protein from Bacillus subtilis (strain 168).